Here is a 279-residue protein sequence, read N- to C-terminus: MRLDVVTIFGEYLQPLQLSLIGKAQAQGLLDVRVRDLREHTHDRHRTVDDTPYGGGAGLLMKPEPWGEALDAVLADPPEDADPRGPVLVVPSPVGEVFTQRAAVELAAEPWLVFACGRYEGIDARVVEHYRTRVRVREVSLGDYVLNGGEVAVLAITEAVARLLPGVIGNAASLTEESHAPEHDGLLEHPAYTKPASWRGLDVPAVLAGGNHAAVERWRRDEALRRTATRRPDVLARLDPERCDARDLAVLAELGWTPDGSGFRAGGDPVADSSDTNEP.

S-adenosyl-L-methionine-binding positions include Gly117 and 141 to 146 (LGDYVL). Residues 256–279 (WTPDGSGFRAGGDPVADSSDTNEP) form a disordered region.

Belongs to the RNA methyltransferase TrmD family. As to quaternary structure, homodimer.

Its subcellular location is the cytoplasm. The catalysed reaction is guanosine(37) in tRNA + S-adenosyl-L-methionine = N(1)-methylguanosine(37) in tRNA + S-adenosyl-L-homocysteine + H(+). In terms of biological role, specifically methylates guanosine-37 in various tRNAs. The chain is tRNA (guanine-N(1)-)-methyltransferase from Kineococcus radiotolerans (strain ATCC BAA-149 / DSM 14245 / SRS30216).